The sequence spans 124 residues: Small ribosomal subunit protein uS13 (124 aa).

Positions 95 to 124 (GLPVRGQRTKTNARTRKGPKRTIAGKKKAR) are disordered.

The protein belongs to the universal ribosomal protein uS13 family. Part of the 30S ribosomal subunit. Forms a loose heterodimer with protein S19. Forms two bridges to the 50S subunit in the 70S ribosome.

Functionally, located at the top of the head of the 30S subunit, it contacts several helices of the 16S rRNA. In the 70S ribosome it contacts the 23S rRNA (bridge B1a) and protein L5 of the 50S subunit (bridge B1b), connecting the 2 subunits; these bridges are implicated in subunit movement. Contacts the tRNAs in the A and P-sites. The polypeptide is Small ribosomal subunit protein uS13 (Mycobacterium marinum (strain ATCC BAA-535 / M)).